A 173-amino-acid polypeptide reads, in one-letter code: Small ribosomal subunit protein uS5 (173 aa).

One can recognise an S5 DRBM domain in the interval 17–80 (WQERVIQIRR…ADGKKQLIEV (64 aa)).

The protein belongs to the universal ribosomal protein uS5 family. In terms of assembly, part of the 30S ribosomal subunit. Contacts proteins S4 and S8.

In terms of biological role, with S4 and S12 plays an important role in translational accuracy. Located at the back of the 30S subunit body where it stabilizes the conformation of the head with respect to the body. This is Small ribosomal subunit protein uS5 from Microcystis aeruginosa (strain NIES-843 / IAM M-2473).